The primary structure comprises 410 residues: Serine/threonine transporter SstT (410 aa).

Helical transmembrane passes span 11 to 31 (VSLV…AVTV), 45 to 65 (FVGA…ISAI), 79 to 99 (ILIL…VASF), 138 to 158 (ALLN…GIAL), 179 to 199 (IVTW…FDAI), 214 to 234 (LAVL…LIVF), 285 to 305 (ISIP…ISVL), 327 to 347 (VLSA…LLLI), and 353 to 373 (LFGI…IIGV).

The protein belongs to the dicarboxylate/amino acid:cation symporter (DAACS) (TC 2.A.23) family.

It localises to the cell membrane. It catalyses the reaction L-serine(in) + Na(+)(in) = L-serine(out) + Na(+)(out). The catalysed reaction is L-threonine(in) + Na(+)(in) = L-threonine(out) + Na(+)(out). In terms of biological role, involved in the import of serine and threonine into the cell, with the concomitant import of sodium (symport system). The sequence is that of Serine/threonine transporter SstT from Geobacillus thermodenitrificans (strain NG80-2).